A 205-amino-acid chain; its full sequence is uncharacterized protein (205 aa).

The next 3 helical transmembrane spans lie at 45–65, 119–139, and 144–164; these read LFFY…FLVI, VFWL…VTAF, and FEWM…LWGY.

It belongs to the TVP23 family.

The protein localises to the membrane. This is an uncharacterized protein from Caenorhabditis elegans.